The primary structure comprises 275 residues: 4-diphosphocytidyl-2-C-methyl-D-erythritol kinase (275 aa).

Lysine 14 is a catalytic residue. Residue 98-108 (PMGAGLGGGSS) coordinates ATP. The active site involves aspartate 140.

It belongs to the GHMP kinase family. IspE subfamily.

The enzyme catalyses 4-CDP-2-C-methyl-D-erythritol + ATP = 4-CDP-2-C-methyl-D-erythritol 2-phosphate + ADP + H(+). Its pathway is isoprenoid biosynthesis; isopentenyl diphosphate biosynthesis via DXP pathway; isopentenyl diphosphate from 1-deoxy-D-xylulose 5-phosphate: step 3/6. Functionally, catalyzes the phosphorylation of the position 2 hydroxy group of 4-diphosphocytidyl-2C-methyl-D-erythritol. The chain is 4-diphosphocytidyl-2-C-methyl-D-erythritol kinase from Francisella tularensis subsp. tularensis (strain FSC 198).